The primary structure comprises 232 residues: Phosphoglycolate phosphatase (232 aa).

The Nucleophile role is filled by D13. Mg(2+)-binding residues include D13, D15, and D175.

The protein belongs to the HAD-like hydrolase superfamily. CbbY/CbbZ/Gph/YieH family. As to quaternary structure, monomer. The cofactor is Mg(2+). Chloride serves as cofactor.

The catalysed reaction is 2-phosphoglycolate + H2O = glycolate + phosphate. The protein operates within organic acid metabolism; glycolate biosynthesis; glycolate from 2-phosphoglycolate: step 1/1. In terms of biological role, specifically catalyzes the dephosphorylation of 2-phosphoglycolate. Is involved in the dissimilation of the intracellular 2-phosphoglycolate formed during the DNA repair of 3'-phosphoglycolate ends, a major class of DNA lesions induced by oxidative stress. The protein is Phosphoglycolate phosphatase of Yersinia pseudotuberculosis serotype I (strain IP32953).